Consider the following 185-residue polypeptide: Ribosome-recycling factor (185 aa).

The interval 135-159 (ANDEVKKLEKDKAITEDESKKGQDE) is disordered.

The protein belongs to the RRF family.

It is found in the cytoplasm. Its function is as follows. Responsible for the release of ribosomes from messenger RNA at the termination of protein biosynthesis. May increase the efficiency of translation by recycling ribosomes from one round of translation to another. This is Ribosome-recycling factor from Campylobacter curvus (strain 525.92).